A 230-amino-acid chain; its full sequence is Large ribosomal subunit protein uL1 (230 aa).

This sequence belongs to the universal ribosomal protein uL1 family. Part of the 50S ribosomal subunit.

Functionally, binds directly to 23S rRNA. The L1 stalk is quite mobile in the ribosome, and is involved in E site tRNA release. Its function is as follows. Protein L1 is also a translational repressor protein, it controls the translation of the L11 operon by binding to its mRNA. In Oenococcus oeni (strain ATCC BAA-331 / PSU-1), this protein is Large ribosomal subunit protein uL1.